The sequence spans 355 residues: 6-aminohexanoate-oligomer endohydrolase (355 aa).

The active-site Nucleophile is T267.

The protein belongs to the peptidase S58 family. As to quaternary structure, heterotetramer composed of 4 alpha/beta heterodimers. Post-translationally, expressed as an inactive precursor that is cleaved autocatalytically at Asn266/Thr267 to generate an active enzyme composed of an alpha subunit and a beta subunit.

The catalysed reaction is [N-(6-aminohexanoyl)]n + H2O = [N-(6-aminohexanoyl)]n-x + [N-(6-aminohexanoyl)]x.. It participates in xenobiotic degradation; nylon-6 oligomer degradation. Functionally, involved in the degradation of nylon-6 oligomers. Degrades cyclic and linear oligomers of 6-aminohexanoate (Ahx) with a degree of polymerization greater than three by an endo-type mode. Cannot use Ahx cyclic dimer or the Ahx linear dimer. This chain is 6-aminohexanoate-oligomer endohydrolase, found in Kocuria sp. (strain KY2).